We begin with the raw amino-acid sequence, 411 residues long: Imidazolonepropionase (411 aa).

2 residues coordinate Fe(3+): His-75 and His-77. The Zn(2+) site is built by His-75 and His-77. Residues Arg-84, Tyr-147, and His-180 each coordinate 4-imidazolone-5-propanoate. Tyr-147 lines the N-formimidoyl-L-glutamate pocket. Fe(3+) is bound at residue His-245. His-245 serves as a coordination point for Zn(2+). Gln-248 serves as a coordination point for 4-imidazolone-5-propanoate. Asp-320 is a binding site for Fe(3+). Zn(2+) is bound at residue Asp-320. Asn-322 and Gly-324 together coordinate N-formimidoyl-L-glutamate. Position 325 (Thr-325) interacts with 4-imidazolone-5-propanoate.

The protein belongs to the metallo-dependent hydrolases superfamily. HutI family. Requires Zn(2+) as cofactor. Fe(3+) is required as a cofactor.

The protein localises to the cytoplasm. The catalysed reaction is 4-imidazolone-5-propanoate + H2O = N-formimidoyl-L-glutamate. It participates in amino-acid degradation; L-histidine degradation into L-glutamate; N-formimidoyl-L-glutamate from L-histidine: step 3/3. In terms of biological role, catalyzes the hydrolytic cleavage of the carbon-nitrogen bond in imidazolone-5-propanoate to yield N-formimidoyl-L-glutamate. It is the third step in the universal histidine degradation pathway. This chain is Imidazolonepropionase, found in Aeromonas hydrophila subsp. hydrophila (strain ATCC 7966 / DSM 30187 / BCRC 13018 / CCUG 14551 / JCM 1027 / KCTC 2358 / NCIMB 9240 / NCTC 8049).